Reading from the N-terminus, the 317-residue chain is Acetyl-coenzyme A carboxylase carboxyl transferase subunit alpha (317 aa).

The 262-residue stretch at 32–293 (NLSEEIARLE…KRLLTSELQA (262 aa)) folds into the CoA carboxyltransferase C-terminal domain.

Belongs to the AccA family. In terms of assembly, acetyl-CoA carboxylase is a heterohexamer composed of biotin carboxyl carrier protein (AccB), biotin carboxylase (AccC) and two subunits each of ACCase subunit alpha (AccA) and ACCase subunit beta (AccD).

Its subcellular location is the cytoplasm. It catalyses the reaction N(6)-carboxybiotinyl-L-lysyl-[protein] + acetyl-CoA = N(6)-biotinyl-L-lysyl-[protein] + malonyl-CoA. It participates in lipid metabolism; malonyl-CoA biosynthesis; malonyl-CoA from acetyl-CoA: step 1/1. Functionally, component of the acetyl coenzyme A carboxylase (ACC) complex. First, biotin carboxylase catalyzes the carboxylation of biotin on its carrier protein (BCCP) and then the CO(2) group is transferred by the carboxyltransferase to acetyl-CoA to form malonyl-CoA. The sequence is that of Acetyl-coenzyme A carboxylase carboxyl transferase subunit alpha from Legionella pneumophila (strain Paris).